A 358-amino-acid polypeptide reads, in one-letter code: Alanine racemase (358 aa).

The Proton acceptor; specific for D-alanine role is filled by Lys35. Lys35 carries the post-translational modification N6-(pyridoxal phosphate)lysine. Arg130 serves as a coordination point for substrate. Tyr255 (proton acceptor; specific for L-alanine) is an active-site residue. Met303 contacts substrate.

It belongs to the alanine racemase family. Pyridoxal 5'-phosphate is required as a cofactor.

The catalysed reaction is L-alanine = D-alanine. It participates in amino-acid biosynthesis; D-alanine biosynthesis; D-alanine from L-alanine: step 1/1. Functionally, catalyzes the interconversion of L-alanine and D-alanine. May also act on other amino acids. The sequence is that of Alanine racemase (alr) from Shewanella putrefaciens (strain CN-32 / ATCC BAA-453).